Here is a 163-residue protein sequence, read N- to C-terminus: Nucleotide-binding protein YajQ (163 aa).

The protein belongs to the YajQ family.

In terms of biological role, nucleotide-binding protein. The chain is Nucleotide-binding protein YajQ from Shigella dysenteriae serotype 1 (strain Sd197).